A 677-amino-acid chain; its full sequence is Vertnin (677 aa).

Disordered stretches follow at residues Gly-356 to Glu-376 and His-458 to Pro-490. Over residues His-458–Gln-472 the composition is skewed to basic and acidic residues.

Belongs to the vertnin family.

It is found in the nucleus. Functionally, functions as a transcriptional repressor that modulates bmp2b expression during dorsoventral patterning. The protein is Vertnin (vrtn) of Danio rerio (Zebrafish).